The chain runs to 434 residues: Methylenetetrahydrofolate--tRNA-(uracil-5-)-methyltransferase TrmFO (434 aa).

10 to 15 (GAGLAG) provides a ligand contact to FAD.

The protein belongs to the MnmG family. TrmFO subfamily. It depends on FAD as a cofactor.

Its subcellular location is the cytoplasm. It carries out the reaction uridine(54) in tRNA + (6R)-5,10-methylene-5,6,7,8-tetrahydrofolate + NADH + H(+) = 5-methyluridine(54) in tRNA + (6S)-5,6,7,8-tetrahydrofolate + NAD(+). The enzyme catalyses uridine(54) in tRNA + (6R)-5,10-methylene-5,6,7,8-tetrahydrofolate + NADPH + H(+) = 5-methyluridine(54) in tRNA + (6S)-5,6,7,8-tetrahydrofolate + NADP(+). Catalyzes the folate-dependent formation of 5-methyl-uridine at position 54 (M-5-U54) in all tRNAs. The protein is Methylenetetrahydrofolate--tRNA-(uracil-5-)-methyltransferase TrmFO of Bacillus mycoides (strain KBAB4) (Bacillus weihenstephanensis).